A 526-amino-acid polypeptide reads, in one-letter code: tRNA-2-methylthio-N(6)-dimethylallyladenosine synthase (526 aa).

One can recognise an MTTase N-terminal domain in the interval 14–130; it reads RTYQVRTYGC…LPTLLERARH (117 aa). Cys23, Cys59, Cys93, Cys167, Cys171, and Cys174 together coordinate [4Fe-4S] cluster. The 249-residue stretch at 153 to 401 folds into the Radical SAM core domain; sequence RESAYAGWVS…IELQERISLE (249 aa). Residues 404–483 form the TRAM domain; sequence QAQVGRTLEL…PHHLIADGAL (80 aa).

It belongs to the methylthiotransferase family. MiaB subfamily. In terms of assembly, monomer. [4Fe-4S] cluster serves as cofactor.

Its subcellular location is the cytoplasm. The enzyme catalyses N(6)-dimethylallyladenosine(37) in tRNA + (sulfur carrier)-SH + AH2 + 2 S-adenosyl-L-methionine = 2-methylsulfanyl-N(6)-dimethylallyladenosine(37) in tRNA + (sulfur carrier)-H + 5'-deoxyadenosine + L-methionine + A + S-adenosyl-L-homocysteine + 2 H(+). Its function is as follows. Catalyzes the methylthiolation of N6-(dimethylallyl)adenosine (i(6)A), leading to the formation of 2-methylthio-N6-(dimethylallyl)adenosine (ms(2)i(6)A) at position 37 in tRNAs that read codons beginning with uridine. The sequence is that of tRNA-2-methylthio-N(6)-dimethylallyladenosine synthase from Mycobacterium sp. (strain JLS).